The sequence spans 961 residues: Glycine dehydrogenase (decarboxylating) (961 aa).

Position 709 is an N6-(pyridoxal phosphate)lysine (K709).

The protein belongs to the GcvP family. As to quaternary structure, the glycine cleavage system is composed of four proteins: P, T, L and H. Requires pyridoxal 5'-phosphate as cofactor.

It catalyses the reaction N(6)-[(R)-lipoyl]-L-lysyl-[glycine-cleavage complex H protein] + glycine + H(+) = N(6)-[(R)-S(8)-aminomethyldihydrolipoyl]-L-lysyl-[glycine-cleavage complex H protein] + CO2. In terms of biological role, the glycine cleavage system catalyzes the degradation of glycine. The P protein binds the alpha-amino group of glycine through its pyridoxal phosphate cofactor; CO(2) is released and the remaining methylamine moiety is then transferred to the lipoamide cofactor of the H protein. The polypeptide is Glycine dehydrogenase (decarboxylating) (Streptomyces avermitilis (strain ATCC 31267 / DSM 46492 / JCM 5070 / NBRC 14893 / NCIMB 12804 / NRRL 8165 / MA-4680)).